A 132-amino-acid chain; its full sequence is UPF0299 membrane protein Ent638_2744 (132 aa).

4 consecutive transmembrane segments (helical) span residues 8–28, 31–51, 63–83, and 93–113; these read VWQY…GIFI, LLPI…LLLA, GCFV…VGVM, and FGPI…VVSW.

This sequence belongs to the UPF0299 family.

The protein resides in the cell inner membrane. This is UPF0299 membrane protein Ent638_2744 from Enterobacter sp. (strain 638).